Here is a 184-residue protein sequence, read N- to C-terminus: Peptidyl-tRNA hydrolase (184 aa).

Tyrosine 14 provides a ligand contact to tRNA. The Proton acceptor role is filled by histidine 19. The tRNA site is built by phenylalanine 64, asparagine 66, and asparagine 112.

The protein belongs to the PTH family. As to quaternary structure, monomer.

Its subcellular location is the cytoplasm. The catalysed reaction is an N-acyl-L-alpha-aminoacyl-tRNA + H2O = an N-acyl-L-amino acid + a tRNA + H(+). Its function is as follows. Hydrolyzes ribosome-free peptidyl-tRNAs (with 1 or more amino acids incorporated), which drop off the ribosome during protein synthesis, or as a result of ribosome stalling. Functionally, catalyzes the release of premature peptidyl moieties from peptidyl-tRNA molecules trapped in stalled 50S ribosomal subunits, and thus maintains levels of free tRNAs and 50S ribosomes. This Thermoanaerobacter pseudethanolicus (strain ATCC 33223 / 39E) (Clostridium thermohydrosulfuricum) protein is Peptidyl-tRNA hydrolase.